A 198-amino-acid chain; its full sequence is MNKIFGVKIDSQQKKRQQSNKNLTVFNNGRYLIYIGDIHFDRKFHREALRYYLLGCGLETAFYSDPVKTSVTNSKYLTFLSRRIFDCFYFLRAPMQAIVVSQFFGNLNQTCLVSFKIIQEEYYQLDTNYFQYIWELPLLEILLTTFTKQKDLKKIYLINQIISNPIINENNHPDIRKNFIKNTKHNFWKAISSNYLLQ.

Belongs to the Integrator subunit 8 family. In terms of assembly, component of the Integrator complex. The core complex associates with protein phosphatase 2A subunits, to form the Integrator-PP2A (INTAC) complex.

Its subcellular location is the nucleus. The protein resides in the chromosome. In terms of biological role, component of the integrator complex, a multiprotein complex that terminates RNA polymerase II (Pol II) transcription in the promoter-proximal region of genes. The integrator complex provides a quality checkpoint during transcription elongation by driving premature transcription termination of transcripts that are unfavorably configured for transcriptional elongation: the complex terminates transcription by (1) catalyzing dephosphorylation of the C-terminal domain (CTD) of Pol II subunit polr2a, (2) degrading the exiting nascent RNA transcript via endonuclease activity and (3) promoting the release of Pol II from bound DNA. The integrator complex is also involved in terminating the synthesis of non-coding Pol II transcripts, such as enhancer RNAs (eRNAs), small nuclear RNAs (snRNAs), telomerase RNAs and long non-coding RNAs (lncRNAs). Within the integrator complex, INTS8 is required for the recruitment of protein phosphatase 2A (PP2A) to transcription pause-release checkpoint. This Dictyostelium discoideum (Social amoeba) protein is Integrator complex subunit 8-like protein.